A 320-amino-acid chain; its full sequence is Transcription factor bHLH34 (320 aa).

The bHLH domain occupies 162–213 (SKPGTKACREKLRREKLNDKFMDLSSVLEPGRTPKTDKSAILDDAIRVVNQL). Residues 299 to 320 (WSPLPPADRDTSRDLKNLPPVA) are disordered. A compositionally biased stretch (basic and acidic residues) spans 305–314 (ADRDTSRDLK).

In terms of assembly, homodimer. As to expression, expressed constitutively in roots, leaves, stems, and flowers.

It is found in the nucleus. This chain is Transcription factor bHLH34 (BHLH34), found in Arabidopsis thaliana (Mouse-ear cress).